The following is a 482-amino-acid chain: tRNA sulfurtransferase (482 aa).

The THUMP domain maps to 61–165 (LAIRDALTRI…DDRLLLIKGR (105 aa)). Residues 183–184 (LI), K265, G287, and Q296 contribute to the ATP site. A disulfide bridge links C344 with C456. A Rhodanese domain is found at 404–482 (FGPNDVILDI…GFNNVKVYRP (79 aa)). C456 functions as the Cysteine persulfide intermediate in the catalytic mechanism.

This sequence belongs to the ThiI family.

Its subcellular location is the cytoplasm. It catalyses the reaction [ThiI sulfur-carrier protein]-S-sulfanyl-L-cysteine + a uridine in tRNA + 2 reduced [2Fe-2S]-[ferredoxin] + ATP + H(+) = [ThiI sulfur-carrier protein]-L-cysteine + a 4-thiouridine in tRNA + 2 oxidized [2Fe-2S]-[ferredoxin] + AMP + diphosphate. It carries out the reaction [ThiS sulfur-carrier protein]-C-terminal Gly-Gly-AMP + S-sulfanyl-L-cysteinyl-[cysteine desulfurase] + AH2 = [ThiS sulfur-carrier protein]-C-terminal-Gly-aminoethanethioate + L-cysteinyl-[cysteine desulfurase] + A + AMP + 2 H(+). The protein operates within cofactor biosynthesis; thiamine diphosphate biosynthesis. Its function is as follows. Catalyzes the ATP-dependent transfer of a sulfur to tRNA to produce 4-thiouridine in position 8 of tRNAs, which functions as a near-UV photosensor. Also catalyzes the transfer of sulfur to the sulfur carrier protein ThiS, forming ThiS-thiocarboxylate. This is a step in the synthesis of thiazole, in the thiamine biosynthesis pathway. The sulfur is donated as persulfide by IscS. The polypeptide is tRNA sulfurtransferase (Escherichia coli (strain 55989 / EAEC)).